The chain runs to 351 residues: UDP-3-O-acylglucosamine N-acyltransferase (351 aa).

The Proton acceptor role is filled by His-240.

Belongs to the transferase hexapeptide repeat family. LpxD subfamily. In terms of assembly, homotrimer.

The enzyme catalyses a UDP-3-O-[(3R)-3-hydroxyacyl]-alpha-D-glucosamine + a (3R)-hydroxyacyl-[ACP] = a UDP-2-N,3-O-bis[(3R)-3-hydroxyacyl]-alpha-D-glucosamine + holo-[ACP] + H(+). The protein operates within bacterial outer membrane biogenesis; LPS lipid A biosynthesis. In terms of biological role, catalyzes the N-acylation of UDP-3-O-acylglucosamine using 3-hydroxyacyl-ACP as the acyl donor. Is involved in the biosynthesis of lipid A, a phosphorylated glycolipid that anchors the lipopolysaccharide to the outer membrane of the cell. This chain is UDP-3-O-acylglucosamine N-acyltransferase, found in Pseudomonas putida (strain ATCC 700007 / DSM 6899 / JCM 31910 / BCRC 17059 / LMG 24140 / F1).